A 214-amino-acid polypeptide reads, in one-letter code: Thiamine-phosphate synthase (214 aa).

4-amino-2-methyl-5-(diphosphooxymethyl)pyrimidine-binding positions include 37–41 and Asn73; that span reads QYREK. Mg(2+) contacts are provided by Asp74 and Asp93. Ser112 is a binding site for 4-amino-2-methyl-5-(diphosphooxymethyl)pyrimidine. A 2-[(2R,5Z)-2-carboxy-4-methylthiazol-5(2H)-ylidene]ethyl phosphate-binding site is contributed by 139–141; it reads TIS. Lys142 contacts 4-amino-2-methyl-5-(diphosphooxymethyl)pyrimidine. Residues Gly171 and 191 to 192 each bind 2-[(2R,5Z)-2-carboxy-4-methylthiazol-5(2H)-ylidene]ethyl phosphate; that span reads IS.

The protein belongs to the thiamine-phosphate synthase family. Mg(2+) serves as cofactor.

It catalyses the reaction 2-[(2R,5Z)-2-carboxy-4-methylthiazol-5(2H)-ylidene]ethyl phosphate + 4-amino-2-methyl-5-(diphosphooxymethyl)pyrimidine + 2 H(+) = thiamine phosphate + CO2 + diphosphate. It carries out the reaction 2-(2-carboxy-4-methylthiazol-5-yl)ethyl phosphate + 4-amino-2-methyl-5-(diphosphooxymethyl)pyrimidine + 2 H(+) = thiamine phosphate + CO2 + diphosphate. The enzyme catalyses 4-methyl-5-(2-phosphooxyethyl)-thiazole + 4-amino-2-methyl-5-(diphosphooxymethyl)pyrimidine + H(+) = thiamine phosphate + diphosphate. The protein operates within cofactor biosynthesis; thiamine diphosphate biosynthesis; thiamine phosphate from 4-amino-2-methyl-5-diphosphomethylpyrimidine and 4-methyl-5-(2-phosphoethyl)-thiazole: step 1/1. Condenses 4-methyl-5-(beta-hydroxyethyl)thiazole monophosphate (THZ-P) and 2-methyl-4-amino-5-hydroxymethyl pyrimidine pyrophosphate (HMP-PP) to form thiamine monophosphate (TMP). The sequence is that of Thiamine-phosphate synthase from Listeria monocytogenes serotype 4b (strain CLIP80459).